The sequence spans 340 residues: Extracellular matrix protein-binding protein emp (340 aa).

The signal sequence occupies residues 1–26; the sequence is MKKKLLVLTMSTLFATQIMNSNHAKA.

The protein localises to the cell surface. Its function is as follows. Adhesin that binds to the host cell extracellular matrix proteins fibronectin, fibrinogen, collagen, and vitronectin. The chain is Extracellular matrix protein-binding protein emp (emp) from Staphylococcus aureus (strain MSSA476).